The sequence spans 158 residues: RNA pyrophosphohydrolase (158 aa).

Residues 6-149 enclose the Nudix hydrolase domain; the sequence is GYRLNVGIVL…KRHVYRKVMK (144 aa). The short motif at 38–59 is the Nudix box element; sequence GGINIGETPEQAMYRELFEEIG.

This sequence belongs to the Nudix hydrolase family. RppH subfamily. Requires a divalent metal cation as cofactor.

Its function is as follows. Accelerates the degradation of transcripts by removing pyrophosphate from the 5'-end of triphosphorylated RNA, leading to a more labile monophosphorylated state that can stimulate subsequent ribonuclease cleavage. This chain is RNA pyrophosphohydrolase, found in Blochmanniella floridana.